We begin with the raw amino-acid sequence, 398 residues long: Ubiquitin-like modifier-activating enzyme 5 (398 aa).

ATP-binding residues include G76, D97, K120, N143, and N177. The Zn(2+) site is built by C219 and C222. C243 serves as the catalytic Glycyl thioester intermediate. C296 and C301 together coordinate Zn(2+).

It belongs to the ubiquitin-activating E1 family. UBA5 subfamily.

Functionally, E1-like enzyme which activates UFM1. The protein is Ubiquitin-like modifier-activating enzyme 5 of Drosophila grimshawi (Hawaiian fruit fly).